Consider the following 576-residue polypeptide: uncharacterized protein (576 aa).

Polar residues predominate over residues Asp-241–Ala-261. The tract at residues Asp-241 to Pro-270 is disordered.

This is an uncharacterized protein from Bacillus subtilis (strain 168).